A 281-amino-acid polypeptide reads, in one-letter code: Pantothenate synthetase (281 aa).

Residue 30–37 participates in ATP binding; sequence MGNLHQGH. The active-site Proton donor is H37. A (R)-pantoate-binding site is contributed by Q61. Q61 contacts beta-alanine. 149-152 is an ATP binding site; the sequence is GNKD. Q155 lines the (R)-pantoate pocket. Residues I178 and 186 to 189 each bind ATP; that span reads MSSR.

This sequence belongs to the pantothenate synthetase family. In terms of assembly, homodimer.

Its subcellular location is the cytoplasm. The catalysed reaction is (R)-pantoate + beta-alanine + ATP = (R)-pantothenate + AMP + diphosphate + H(+). It functions in the pathway cofactor biosynthesis; (R)-pantothenate biosynthesis; (R)-pantothenate from (R)-pantoate and beta-alanine: step 1/1. Functionally, catalyzes the condensation of pantoate with beta-alanine in an ATP-dependent reaction via a pantoyl-adenylate intermediate. This is Pantothenate synthetase from Shewanella sp. (strain ANA-3).